The sequence spans 613 residues: Dihydroxy-acid dehydratase (613 aa).

Aspartate 81 contributes to the Mg(2+) binding site. Cysteine 122 serves as a coordination point for [2Fe-2S] cluster. Mg(2+)-binding residues include aspartate 123 and lysine 124. Position 124 is an N6-carboxylysine (lysine 124). Cysteine 195 contacts [2Fe-2S] cluster. Glutamate 491 serves as a coordination point for Mg(2+). The Proton acceptor role is filled by serine 517.

It belongs to the IlvD/Edd family. In terms of assembly, homodimer. Requires [2Fe-2S] cluster as cofactor. The cofactor is Mg(2+).

It carries out the reaction (2R)-2,3-dihydroxy-3-methylbutanoate = 3-methyl-2-oxobutanoate + H2O. The enzyme catalyses (2R,3R)-2,3-dihydroxy-3-methylpentanoate = (S)-3-methyl-2-oxopentanoate + H2O. It participates in amino-acid biosynthesis; L-isoleucine biosynthesis; L-isoleucine from 2-oxobutanoate: step 3/4. Its pathway is amino-acid biosynthesis; L-valine biosynthesis; L-valine from pyruvate: step 3/4. Functionally, functions in the biosynthesis of branched-chain amino acids. Catalyzes the dehydration of (2R,3R)-2,3-dihydroxy-3-methylpentanoate (2,3-dihydroxy-3-methylvalerate) into 2-oxo-3-methylpentanoate (2-oxo-3-methylvalerate) and of (2R)-2,3-dihydroxy-3-methylbutanoate (2,3-dihydroxyisovalerate) into 2-oxo-3-methylbutanoate (2-oxoisovalerate), the penultimate precursor to L-isoleucine and L-valine, respectively. The polypeptide is Dihydroxy-acid dehydratase (Vibrio atlanticus (strain LGP32) (Vibrio splendidus (strain Mel32))).